The chain runs to 256 residues: Triosephosphate isomerase (256 aa).

A substrate-binding site is contributed by 12 to 14 (NWK). The active-site Electrophile is the His99. Catalysis depends on Glu169, which acts as the Proton acceptor. Residues Gly175, Ser214, and 235–236 (GG) each bind substrate.

It belongs to the triosephosphate isomerase family. Homodimer.

The protein localises to the cytoplasm. It catalyses the reaction D-glyceraldehyde 3-phosphate = dihydroxyacetone phosphate. Its pathway is carbohydrate biosynthesis; gluconeogenesis. It participates in carbohydrate degradation; glycolysis; D-glyceraldehyde 3-phosphate from glycerone phosphate: step 1/1. Its function is as follows. Involved in the gluconeogenesis. Catalyzes stereospecifically the conversion of dihydroxyacetone phosphate (DHAP) to D-glyceraldehyde-3-phosphate (G3P). The chain is Triosephosphate isomerase from Mesorhizobium japonicum (strain LMG 29417 / CECT 9101 / MAFF 303099) (Mesorhizobium loti (strain MAFF 303099)).